The primary structure comprises 57 residues: uncharacterized protein (57 aa).

This is an uncharacterized protein from Bacillus subtilis (strain 168).